A 224-amino-acid chain; its full sequence is Adenylate kinase (224 aa).

ATP is bound at residue 10–15 (GSGKST). Residues 30-59 (ASGDIIRAEINKGNALGREMKKYIEKGDLL) are NMP. AMP-binding positions include Ser31, Arg36, 57-59 (DLL), 83-86 (GYPR), and Gln90. Residues 124–161 (GRRICRQCGAVYHIKYNPSKVPGKCDICGGEVIQREDD) are LID. Arg125 serves as a coordination point for ATP. 2 residues coordinate Zn(2+): Cys128 and Cys131. Residue 134 to 135 (VY) coordinates ATP. Zn(2+) contacts are provided by Cys148 and Cys151. Positions 158 and 169 each coordinate AMP. Gly197 is a binding site for ATP.

It belongs to the adenylate kinase family. Monomer.

The protein resides in the cytoplasm. The enzyme catalyses AMP + ATP = 2 ADP. Its pathway is purine metabolism; AMP biosynthesis via salvage pathway; AMP from ADP: step 1/1. Catalyzes the reversible transfer of the terminal phosphate group between ATP and AMP. Plays an important role in cellular energy homeostasis and in adenine nucleotide metabolism. In Thermococcus sibiricus (strain DSM 12597 / MM 739), this protein is Adenylate kinase.